The following is a 241-amino-acid chain: Carboxysome assembly protein CcmN (241 aa).

The segment at glycine 123–alanine 206 is disordered. Over residues glutamine 185 to serine 195 the composition is skewed to polar residues. Low complexity predominate over residues threonine 196–alanine 206. The Encapsulation peptide motif lies at valine 219–serine 241.

This sequence belongs to the CcmN family. In terms of assembly, interacts with full-length and the N-terminal 249 residues of CcmM; a probable CcmM-CcaA-CcmN complex can also be isolated. Interacts with CcmK.

The protein resides in the carboxysome. Functionally, required for carboxysome formation; the N-terminus interacts with CcmM which itself binds RuBisCO (ribulose bisphosphate carboxylase, rbcL-rbcS). May also contact shell protein CcmK to help assemble the carboxysome. Its function is as follows. Beta-carboxysome assembly initiates when soluble RuBisCO is condensed into a liquid matrix in a pre-carboxysome by the RbcS-like domains of probably both forms of CcmM. CcmN interacts with the N-terminus of full-length CcmM, and then recruits the CcmK major shell protein via CcmN's encapsulation peptide. Shell formation requires CcmK proteins and CcmO. CcmL caps the otherwise elongated carboxysome. Once fully encapsulated carboxysomes are formed, they migrate within the cell probably via interactions with the cytoskeleton. This Synechocystis sp. (strain ATCC 27184 / PCC 6803 / Kazusa) protein is Carboxysome assembly protein CcmN.